A 523-amino-acid chain; its full sequence is FAD:protein FMN transferase (523 aa).

3 consecutive transmembrane segments (helical) span residues L88–A108, G118–L138, and G169–A189. FAD-binding positions include L277–D279 and D336. A339 contributes to the Mg(2+) binding site. FAD is bound by residues K342 and H423–I425. 2 residues coordinate Mg(2+): D450 and T454.

The protein in the N-terminal section; belongs to the RseC family. This sequence in the C-terminal section; belongs to the ApbE family. Mg(2+) is required as a cofactor.

The protein resides in the cell membrane. The catalysed reaction is L-threonyl-[protein] + FAD = FMN-L-threonyl-[protein] + AMP + H(+). Flavin transferase that catalyzes the transfer of the FMN moiety of FAD and its covalent binding to the hydroxyl group of a threonine residue in a target flavoprotein. Is likely involved in the modification of RnfG and RnfD. Required for nitrogen fixation. The protein is FAD:protein FMN transferase of Rhodobacter capsulatus (Rhodopseudomonas capsulata).